We begin with the raw amino-acid sequence, 350 residues long: Biotin synthase (350 aa).

Residues 63–281 enclose the Radical SAM core domain; it reads GDIELATLLS…IAVARITMPK (219 aa). [4Fe-4S] cluster contacts are provided by Cys78, Cys82, and Cys85. Cys122, Cys153, Cys213, and Arg285 together coordinate [2Fe-2S] cluster.

It belongs to the radical SAM superfamily. Biotin synthase family. As to quaternary structure, homodimer. [4Fe-4S] cluster is required as a cofactor. The cofactor is [2Fe-2S] cluster.

The catalysed reaction is (4R,5S)-dethiobiotin + (sulfur carrier)-SH + 2 reduced [2Fe-2S]-[ferredoxin] + 2 S-adenosyl-L-methionine = (sulfur carrier)-H + biotin + 2 5'-deoxyadenosine + 2 L-methionine + 2 oxidized [2Fe-2S]-[ferredoxin]. Its pathway is cofactor biosynthesis; biotin biosynthesis; biotin from 7,8-diaminononanoate: step 2/2. Catalyzes the conversion of dethiobiotin (DTB) to biotin by the insertion of a sulfur atom into dethiobiotin via a radical-based mechanism. This chain is Biotin synthase, found in Acidovorax sp. (strain JS42).